We begin with the raw amino-acid sequence, 356 residues long: 3-dehydroquinate synthase (356 aa).

NAD(+) is bound by residues 69–74, 103–107, 127–128, lysine 140, and lysine 149; these read DGEQYK, GVVGD, and TT. Zn(2+) is bound by residues glutamate 182, histidine 245, and histidine 262.

The protein belongs to the sugar phosphate cyclases superfamily. Dehydroquinate synthase family. Requires Co(2+) as cofactor. It depends on Zn(2+) as a cofactor. The cofactor is NAD(+).

The protein localises to the cytoplasm. It catalyses the reaction 7-phospho-2-dehydro-3-deoxy-D-arabino-heptonate = 3-dehydroquinate + phosphate. It functions in the pathway metabolic intermediate biosynthesis; chorismate biosynthesis; chorismate from D-erythrose 4-phosphate and phosphoenolpyruvate: step 2/7. Functionally, catalyzes the conversion of 3-deoxy-D-arabino-heptulosonate 7-phosphate (DAHP) to dehydroquinate (DHQ). This chain is 3-dehydroquinate synthase, found in Pseudoalteromonas translucida (strain TAC 125).